The chain runs to 168 residues: Small ribosomal subunit protein uS5 (168 aa).

The 64-residue stretch at 17-80 (IEDQLVAVNR…EDGKKKMINV (64 aa)) folds into the S5 DRBM domain.

Belongs to the universal ribosomal protein uS5 family. Part of the 30S ribosomal subunit. Contacts proteins S4 and S8.

Its function is as follows. With S4 and S12 plays an important role in translational accuracy. Functionally, located at the back of the 30S subunit body where it stabilizes the conformation of the head with respect to the body. This chain is Small ribosomal subunit protein uS5, found in Lactobacillus acidophilus (strain ATCC 700396 / NCK56 / N2 / NCFM).